The primary structure comprises 90 residues: Conotoxin ba9a (90 aa).

The N-terminal stretch at 1-27 is a signal peptide; the sequence is MHLSLARSAGLMWLLLFAVGNFVGVQP. Positions 28–62 are excised as a propeptide; it reads GQITRDVDNGQLADNRRNLQSLRKPMTLFKSLNKR. Glutamate 67 bears the 4-carboxyglutamate mark. 4-hydroxyproline is present on residues proline 76 and proline 80.

In terms of tissue distribution, expressed by the venom duct.

Its subcellular location is the secreted. In Conus bayani (Bayan's cone), this protein is Conotoxin ba9a.